Here is a 231-residue protein sequence, read N- to C-terminus: Ion-translocating oxidoreductase complex subunit E (231 aa).

The next 6 membrane-spanning stretches (helical) occupy residues 18–38 (ALVQ…ATNA), 39–59 (LGLG…ISTL), 63–83 (TPAE…VSAV), 86–106 (LINA…PLIV), 125–145 (ALSA…MCVL), and 182–202 (PFLL…MLAG).

The protein belongs to the NqrDE/RnfAE family. As to quaternary structure, the complex is composed of six subunits: RsxA, RsxB, RsxC, RsxD, RsxE and RsxG.

Its subcellular location is the cell inner membrane. In terms of biological role, part of a membrane-bound complex that couples electron transfer with translocation of ions across the membrane. Required to maintain the reduced state of SoxR. The polypeptide is Ion-translocating oxidoreductase complex subunit E (Escherichia coli (strain SMS-3-5 / SECEC)).